A 367-amino-acid polypeptide reads, in one-letter code: MTPENLPIERYDDQLAEKTARLKTLMSPFTAPEPEVFRSPVSHYRMRAEFRIWHDEDEMYHIMFDQQTKQRIRVDKFPAASELINRLMSALIAAIKPEPILRRKLFQIDYLSTRSGKIIASLLYHRKLDDEWQQQAEKLRDDLRAQGFDLQLIGRASKMKIMLDQDYVDEVLPVAGRDMIYRQVENSFTQPNAALNIQMLEWALDVTTGSKGDLLELYCGNGNFSLALARNFERVLATEIAKPSVAAAQYNIAANQIDNVQIIRMAAEDFTQAMNGVREFNRLKGIDLSSYNCETIFVDPPRSGLDDETVKMVQAYPRILYISCNPETLCANLETLQQTHSISRLALFDQFPYTHHMECGVLLEKRV.

Gln-190, Tyr-218, Asn-223, Glu-239, and Asp-299 together coordinate S-adenosyl-L-methionine. The active-site Nucleophile is Cys-324. Glu-358 serves as the catalytic Proton acceptor.

Belongs to the class I-like SAM-binding methyltransferase superfamily. RNA M5U methyltransferase family. TrmA subfamily.

The enzyme catalyses uridine(54) in tRNA + S-adenosyl-L-methionine = 5-methyluridine(54) in tRNA + S-adenosyl-L-homocysteine + H(+). It carries out the reaction uridine(341) in tmRNA + S-adenosyl-L-methionine = 5-methyluridine(341) in tmRNA + S-adenosyl-L-homocysteine + H(+). Dual-specificity methyltransferase that catalyzes the formation of 5-methyluridine at position 54 (m5U54) in all tRNAs, and that of position 341 (m5U341) in tmRNA (transfer-mRNA). This Serratia proteamaculans (strain 568) protein is tRNA/tmRNA (uracil-C(5))-methyltransferase.